The chain runs to 553 residues: Keratin, type II cytoskeletal 73 (553 aa).

The tract at residues 1-130 (MNRQFTCKSG…DPEIQKVRAQ (130 aa)) is head. The tract at residues 131 to 166 (EREQIKALNNKFASFIDKVRFLEQQNQVLQTKWELL) is coil 1A. The IF rod domain maps to 131–444 (EREQIKALNN…KLLEGEECRM (314 aa)). Positions 167-185 (QQLDLSNCRRNLEPVYEAH) are linker 1. Residues 186-277 (ISSLQKQLDS…CLYEGEITQM (92 aa)) form a coil 1B region. The segment at 278 to 301 (QSHISDTSVVLSMDNNRNLDLDSI) is linker 12. The coil 2 stretch occupies residues 302 to 440 (IAEVRAQYED…ATYRKLLEGE (139 aa)). A tail region spans residues 441 to 539 (ECRMSGEHTN…LGSPSKKTMR (99 aa)).

It belongs to the intermediate filament family. In terms of assembly, heterotetramer of two type I and two type II keratins.

Functionally, has a role in hair formation. Specific component of keratin intermediate filaments in the inner root sheath (IRS) of the hair follicle. The sequence is that of Keratin, type II cytoskeletal 73 (Krt73) from Rattus norvegicus (Rat).